The chain runs to 289 residues: 2-hydroxy-6-oxononadienedioate/2-hydroxy-6-oxononatrienedioate hydrolase (289 aa).

H269 serves as the catalytic Proton acceptor.

This sequence belongs to the AB hydrolase superfamily. MhpC family. In terms of assembly, homodimer.

It catalyses the reaction (2Z,4E)-2-hydroxy-6-oxonona-2,4-dienedioate + H2O = (2Z)-2-hydroxypenta-2,4-dienoate + succinate + H(+). The catalysed reaction is (2Z,4E,7E)-2-hydroxy-6-oxonona-2,4,7-trienedioate + H2O = (2Z)-2-hydroxypenta-2,4-dienoate + fumarate + H(+). It functions in the pathway aromatic compound metabolism; 3-phenylpropanoate degradation. In terms of biological role, catalyzes the cleavage of the C5-C6 bond of 2-hydroxy-6-oxononadienedioate and 2-hydroxy-6-oxononatrienedioate, a dienol ring fission product of the bacterial meta-cleavage pathway for degradation of phenylpropionic acid. The sequence is that of 2-hydroxy-6-oxononadienedioate/2-hydroxy-6-oxononatrienedioate hydrolase from Cupriavidus pinatubonensis (strain JMP 134 / LMG 1197) (Cupriavidus necator (strain JMP 134)).